Reading from the N-terminus, the 506-residue chain is Putative amidase (506 aa).

Catalysis depends on charge relay system residues Lys121 and Ser196. Ser220 functions as the Acyl-ester intermediate in the catalytic mechanism.

Belongs to the amidase family.

The catalysed reaction is a monocarboxylic acid amide + H2O = a monocarboxylate + NH4(+). This is Putative amidase from Synechocystis sp. (strain ATCC 27184 / PCC 6803 / Kazusa).